We begin with the raw amino-acid sequence, 257 residues long: MIIMKKIGILEIVVILSILITSVSLAYKFYSNNGNDYEFDGNQMYKCAWVCEKILNKNFPLNATIIGKWTLSKKPFNGEVKIYDAKGGTLYAIYNGTPITIGGELAYQEDIAAKKIILHPIGKSIIFYELNPIEGKSFRDIANEIENTTKNFNGLNIVDVIVEGSMGVDSKTYTPVERQKIMNNLDVDIKKGLGLYFVDYGIIINGKIHLNTLKNLDNYINSSNISTSKLTIYVVVNNSIDEIPNKIKENYAIITLG.

The chain crosses the membrane as a helical span at residues 7 to 27; it reads IGILEIVVILSILITSVSLAY.

Its subcellular location is the membrane. This is an uncharacterized protein from Methanocaldococcus jannaschii (strain ATCC 43067 / DSM 2661 / JAL-1 / JCM 10045 / NBRC 100440) (Methanococcus jannaschii).